A 337-amino-acid polypeptide reads, in one-letter code: MKIDTSLNMPQLPEALSQAGLQFSVATEEDFDEIMAMSQDIYGGLDYLPTRYTSWLQDTNRTVILARKHGKVIALESVCVIDDGETMLVEGLRVAPQERGKGVAGVLLRFCAELVKSRYPEVKVCRLTRDDQLGPKDFEKYRIITKQGILLMRFRAEDLKLHLSEFGLEGDNESTLSTFCSSPPPVRLDHTAIQQLYLNSDLLHGVLPNATIIQDWQPFKLLPSNMAILLKKEIDWMVDDMSNPTVASLCTFPFRVPIGDDWYYLNIDMFGKDLALARQQFLYHLQRHTATLKGHVMCQMFLDPPLWKAMAEFCHNTLSVELVKEYTEQCVVECDLI.

Positions 1-2 (MK) are cleaved as a propeptide — removed in mature form. The N-acetyltransferase domain maps to 21–157 (LQFSVATEED…GILLMRFRAE (137 aa)).

As to expression, expressed exclusively in the brain and lens.

The enzyme catalyses L-histidine + acetyl-CoA = N(alpha)-acetyl-L-histidine + CoA + H(+). In terms of biological role, enzyme responsible for the N-acetyl-histidine (NAH) synthesis, which is a major constituent of brain and lens of ectothermic vertebrates. The protein is Histidine N-acetyltransferase (hisat) of Oreochromis niloticus (Nile tilapia).